Here is a 346-residue protein sequence, read N- to C-terminus: L-threonine dehydratase catabolic TdcB (346 aa).

59-60 (FT) is a binding site for AMP. N6-(pyridoxal phosphate)lysine is present on K64. AMP-binding positions include Q94, 125-126 (GY), and N321.

The protein belongs to the serine/threonine dehydratase family. In terms of assembly, in the native structure, TdcB is in a dimeric form, whereas in the TdcB-AMP complex, it exists in a tetrameric form (dimer of dimers). Requires pyridoxal 5'-phosphate as cofactor.

It catalyses the reaction L-threonine = 2-oxobutanoate + NH4(+). It functions in the pathway amino-acid degradation; L-threonine degradation via propanoate pathway; propanoate from L-threonine: step 1/4. With respect to regulation, each protein molecule can bind up to four molecules of AMP, which act as an allosteric activator to the enzyme. In terms of biological role, catalyzes the anaerobic formation of alpha-ketobutyrate and ammonia from threonine in a two-step reaction. The first step involved a dehydration of threonine and a production of enamine intermediates (aminocrotonate), which tautomerizes to its imine form (iminobutyrate). Both intermediates are unstable and short-lived. The second step is the nonenzymatic hydrolysis of the enamine/imine intermediates to form 2-ketobutyrate and free ammonia. In the low water environment of the cell, the second step is accelerated by RidA. The sequence is that of L-threonine dehydratase catabolic TdcB (tdcB) from Staphylococcus aureus (strain Mu50 / ATCC 700699).